The primary structure comprises 429 residues: Glutamate-1-semialdehyde 2,1-aminomutase (429 aa).

N6-(pyridoxal phosphate)lysine is present on K265.

Belongs to the class-III pyridoxal-phosphate-dependent aminotransferase family. HemL subfamily. In terms of assembly, homodimer. It depends on pyridoxal 5'-phosphate as a cofactor.

Its subcellular location is the cytoplasm. It carries out the reaction (S)-4-amino-5-oxopentanoate = 5-aminolevulinate. The protein operates within porphyrin-containing compound metabolism; protoporphyrin-IX biosynthesis; 5-aminolevulinate from L-glutamyl-tRNA(Glu): step 2/2. This Legionella pneumophila (strain Corby) protein is Glutamate-1-semialdehyde 2,1-aminomutase.